A 171-amino-acid polypeptide reads, in one-letter code: 3-hydroxydecanoyl-[acyl-carrier-protein] dehydratase (171 aa).

His-70 is a catalytic residue.

Belongs to the thioester dehydratase family. FabA subfamily. Homodimer.

The protein resides in the cytoplasm. The catalysed reaction is a (3R)-hydroxyacyl-[ACP] = a (2E)-enoyl-[ACP] + H2O. The enzyme catalyses (3R)-hydroxydecanoyl-[ACP] = (2E)-decenoyl-[ACP] + H2O. It catalyses the reaction (2E)-decenoyl-[ACP] = (3Z)-decenoyl-[ACP]. Its pathway is lipid metabolism; fatty acid biosynthesis. Its function is as follows. Necessary for the introduction of cis unsaturation into fatty acids. Catalyzes the dehydration of (3R)-3-hydroxydecanoyl-ACP to E-(2)-decenoyl-ACP and then its isomerization to Z-(3)-decenoyl-ACP. Can catalyze the dehydratase reaction for beta-hydroxyacyl-ACPs with saturated chain lengths up to 16:0, being most active on intermediate chain length. This chain is 3-hydroxydecanoyl-[acyl-carrier-protein] dehydratase, found in Ectopseudomonas mendocina (strain ymp) (Pseudomonas mendocina).